The following is a 149-amino-acid chain: Protein FAM72A (149 aa).

The protein belongs to the FAM72 family. As to quaternary structure, interacts with UNG. Expressed at high levels in stomach and also in kidney and, at low levels, in heart (at protein level). In the stomach, highly expressed in foveolar cells, parietal cells and chief cells (at protein level). In kidney, expressed in endothelial cells, mesangial and epithelial cells (parietal and visceral epithelium) around glomerulus (at protein level).

The protein localises to the cytoplasm. The protein resides in the mitochondrion. May play a role in the regulation of cellular reactive oxygen species metabolism. May participate in cell growth regulation. The sequence is that of Protein FAM72A (FAM72A) from Bos taurus (Bovine).